A 213-amino-acid chain; its full sequence is LexA repressor (213 aa).

The segment at residues 31–51 (RAEISRELGFRSPNAAEEYLK) is a DNA-binding region (H-T-H motif). Residues serine 129 and lysine 166 each act as for autocatalytic cleavage activity in the active site.

Belongs to the peptidase S24 family. Homodimer.

It catalyses the reaction Hydrolysis of Ala-|-Gly bond in repressor LexA.. Functionally, represses a number of genes involved in the response to DNA damage (SOS response), including recA and lexA. In the presence of single-stranded DNA, RecA interacts with LexA causing an autocatalytic cleavage which disrupts the DNA-binding part of LexA, leading to derepression of the SOS regulon and eventually DNA repair. The chain is LexA repressor from Mannheimia succiniciproducens (strain KCTC 0769BP / MBEL55E).